The sequence spans 104 residues: BLOC-1-related complex subunit 7 (104 aa).

This sequence belongs to the BORCS7 family.

The protein resides in the lysosome membrane. Its function is as follows. As part of a BORC-like complex may play a role in lysosomes movement and localization at the cell periphery. Associated with the cytosolic face of lysosomes, this complex may couple lysosomes to microtubule plus-end-directed kinesin motor. The chain is BLOC-1-related complex subunit 7 from Xenopus tropicalis (Western clawed frog).